Here is a 149-residue protein sequence, read N- to C-terminus: Large-conductance mechanosensitive channel (149 aa).

Transmembrane regions (helical) follow at residues 16-36 (VMDL…VNSV), 40-60 (LIMP…KFIL), and 89-109 (GSFI…FMMV).

This sequence belongs to the MscL family. As to quaternary structure, homopentamer.

Its subcellular location is the cell inner membrane. Functionally, channel that opens in response to stretch forces in the membrane lipid bilayer. May participate in the regulation of osmotic pressure changes within the cell. The sequence is that of Large-conductance mechanosensitive channel from Paraburkholderia phymatum (strain DSM 17167 / CIP 108236 / LMG 21445 / STM815) (Burkholderia phymatum).